The following is a 129-amino-acid chain: UPF0325 protein YE3288 (129 aa).

This sequence belongs to the UPF0325 family.

The protein is UPF0325 protein YE3288 of Yersinia enterocolitica serotype O:8 / biotype 1B (strain NCTC 13174 / 8081).